A 585-amino-acid polypeptide reads, in one-letter code: MKAIIVLLMVVTSNADRICTGITSSNSPHVVKTATQGEVNVTGVIPLTTTPTKSHFANLKGTKTRGKLCPKCLNCTDLDVALARPKCMGTIPSAKASILHEVKPVTSGCFPIMHDRTKIRQLPNLLRGYEHIRLSTHNVINAETAPGGPYKVGTSGSCPNVTNGNGFFATMAWAVPKNDNNKTATNPLTVEVPYICTEGEDQITVWGFHSDSETQMVKLYGDSKPQKFTSSANGVTTHYVSQIGGFPNQAEDGGLPQSGRIVVDYMVQKSGKTGTITYQRGILLPQKVWCASGRSKVIKGSLPLIGEADCLHEKYGGLNKSKPYYTGEHAKAIGNCPIWVKTPLKLANGTKYRPPAKLLKERGFFGAIAGFLEGGWEGMIAGWHGYTSHGAHGVAVAADLKSTQEAINKITKNLNSLSELEVKNLQRLSGAMDELHNEILELDEKVDDLRADTISSQIELAVLLSNEGIINSEDEHLLALERKLKKMLGPSAVEIGNGCFETKHKCNQTCLDRIAAGTFNAGEFSLPTFDSLNITAASLNDDGLDNHTILLYYSTAASSLAVTLMIAIFIVYMVSRDNVSCSICL.

A signal peptide spans 1–15; it reads MKAIIVLLMVVTSNA. The Extracellular segment spans residues 16–553; the sequence is DRICTGITSS…LDNHTILLYY (538 aa). Cystine bridges form between Cys-19/Cys-499, Cys-75/Cys-87, Cys-109/Cys-158, and Cys-506/Cys-510. 2 N-linked (GlcNAc...) asparagine; by host glycosylation sites follow: Asn-40 and Asn-74. N-linked (GlcNAc...) asparagine; by host glycosylation is found at Asn-160, Asn-181, Asn-319, Asn-348, Asn-507, Asn-533, and Asn-546. The helical transmembrane segment at 554-574 threads the bilayer; the sequence is STAASSLAVTLMIAIFIVYMV. Over 575-585 the chain is Cytoplasmic; that stretch reads SRDNVSCSICL. Residues Cys-581 and Cys-584 are each lipidated (S-palmitoyl cysteine; by host).

The protein belongs to the influenza viruses hemagglutinin family. As to quaternary structure, homotrimer of disulfide-linked HA1-HA2. Post-translationally, palmitoylated. In terms of processing, in natural infection, inactive HA is matured into HA1 and HA2 outside the cell by one or more trypsin-like, arginine-specific endoprotease secreted by the bronchial epithelial cells. One identified protease that may be involved in this process is secreted in lungs by club cells.

It is found in the virion membrane. It localises to the host apical cell membrane. Binds to sialic acid-containing receptors on the cell surface, bringing about the attachment of the virus particle to the cell. Plays a major role in the determination of host range restriction and virulence. Class I viral fusion protein. Responsible for penetration of the virus into the cell cytoplasm by mediating the fusion of the membrane of the endocytosed virus particle with the endosomal membrane. Low pH in endosomes induce an irreversible conformational change in HA2, releasing the fusion hydrophobic peptide. Several trimers are required to form a competent fusion pore. The polypeptide is Hemagglutinin (Influenza B virus (strain B/Victoria/2/1987)).